The primary structure comprises 201 residues: MGRKRGRKEYCPPIYKRQKVARVTNNGYLNFMTEYKKRFYGLSPQDMVHYAAKQWTQLSMAEKEAFKSKKPSTITLKSPAQYVACEMKSDVAGGQQSSCQRQSPSARLRESERRSSRSKTLCRSAKNRQRGKPKPQQSKRRLSHMGSAVAYIHFLRKFQRKNTELRTIDLLKTATRLWCRLPERHRHAFERPLWIVTIGKS.

A disordered region spans residues 93-143; sequence GGQQSSCQRQSPSARLRESERRSSRSKTLCRSAKNRQRGKPKPQQSKRRLS. Polar residues predominate over residues 94 to 104; the sequence is GQQSSCQRQSP. Over residues 125–143 the composition is skewed to basic residues; the sequence is AKNRQRGKPKPQQSKRRLS.

Belongs to the UPF0771 family.

It localises to the nucleus. It is found in the chromosome. Its function is as follows. Regulates chromatin compaction in spermatid nuclei and is essential for male fertility. Functions in parallel with other chromatin-condensing proteins such as ProtA, ProtB and Mst77F. In Drosophila melanogaster (Fruit fly), this protein is Protamine-like protein 99C.